A 404-amino-acid polypeptide reads, in one-letter code: V-set and immunoglobulin domain-containing protein 1 (404 aa).

An N-terminal signal peptide occupies residues 1 to 22 (MMVFAFWKVFLILNCLAGQVNM). In terms of domain architecture, Ig-like V-type spans 23–133 (VQVTIPDTFV…DFFGKNQGIL (111 aa)). Topologically, residues 23–233 (VQVTIPDTFV…EIDLTSSDPE (211 aa)) are extracellular. N-linked (GlcNAc...) asparagine glycosylation is present at N39. Intrachain disulfides connect C44–C117 and C162–C212. The region spanning 141–228 (PSKPFCSIQG…GNSSCEIDLT (88 aa)) is the Ig-like C2-type domain. Residues N201 and N220 are each glycosylated (N-linked (GlcNAc...) asparagine). A helical membrane pass occupies residues 234 to 254 (VGIIIGALVGALTGAAIIICV). At 255 to 404 (VYFARNKVKS…REEEKETVKA (150 aa)) the chain is on the cytoplasmic side. Disordered regions lie at residues 266–285 (QKNL…HHSR) and 298–404 (EGTL…TVKA). 2 positions are modified to phosphoserine: S271 and S272. Polar residues predominate over residues 301-314 (LPSSIHASHNTEPT). Residues 357 to 383 (MELEPETEPEPEPEPEPQPELESELEP) are compositionally biased toward acidic residues. Residues 393–404 (PMREEEKETVKA) are compositionally biased toward basic and acidic residues.

It is found in the membrane. This Rattus norvegicus (Rat) protein is V-set and immunoglobulin domain-containing protein 1 (Vsig1).